Here is a 394-residue protein sequence, read N- to C-terminus: MNVKKLADLDVAGKRVFIRADLNVPQDEAGNIVEDTRIRASLPSIRYCLERSATVMVTSHLGRPTEGECRAEDTLAPIAVRLGELLGKPVRLIRDWVEGGFEVRAGEVVLLENCRCNKGEKKDNEELAKKMAALCDIYVNDAFGTAHRAEATTHGIARFAPVACAGMLMGAEIDALTKATENPARPLVAIVGGAKVSTKLTILKTLAEKVDQLIVGGGIANTFLLASGKRIGESLAEPELVKEAQAIMDMMKARGAEVPLPVDVVVADEVSALARANRIPVDEVGPHDRILDVGPKSSAKLAEIIAHAGTIVWNGPVGVFEHNQFAGGTKMMASAIAHSEAFCIAGGGDTLAAIAKFHIAQDIGYISTGGGAFLEFLEGKKLPAIAALEARFAD.

Residues 21-23, R37, 60-63, R115, and R148 each bind substrate; these read DLN and HLGR. ATP contacts are provided by residues K199, E321, and 347–350; that span reads GGDT.

It belongs to the phosphoglycerate kinase family. Monomer.

It localises to the cytoplasm. The catalysed reaction is (2R)-3-phosphoglycerate + ATP = (2R)-3-phospho-glyceroyl phosphate + ADP. It functions in the pathway carbohydrate degradation; glycolysis; pyruvate from D-glyceraldehyde 3-phosphate: step 2/5. This is Phosphoglycerate kinase from Aromatoleum aromaticum (strain DSM 19018 / LMG 30748 / EbN1) (Azoarcus sp. (strain EbN1)).